Consider the following 1003-residue polypeptide: Retinoblastoma-related protein 1 (1003 aa).

Positions 405–607 (TPVSTAMTTA…EKGSSMYNSL (203 aa)) are domain A. The interval 405 to 860 (TPVSTAMTTA…NEMFIPSVKP (456 aa)) is pocket. The interval 608-729 (AVAKPSLAAE…PGGGGETCAE (122 aa)) is spacer. The domain B stretch occupies residues 730–860 (TAINVFFGKI…NEMFIPSVKP (131 aa)). The segment at 868 to 899 (AGNNSEKNDHNDGQGPASPKPSPFPKLPDMSP) is disordered.

Belongs to the retinoblastoma protein (RB) family. Expressed in roots, stems, leaves and flowers.

The protein localises to the nucleus. Its function is as follows. Regulator of biological processes that recruits a histone deacetylase to control gene transcription. Formation of stable complexes with geminiviridae replication-associated proteins may create a cellular environment which favors viral DNA replication. May play a role in the entry into mitosis, negatively regulating the cell proliferation during leaf, stem, and flower development. Critical regulator of the endocycle. This is Retinoblastoma-related protein 1 (RBR1) from Nicotiana benthamiana.